The following is a 568-amino-acid chain: 2-succinyl-5-enolpyruvyl-6-hydroxy-3-cyclohexene-1-carboxylate synthase (568 aa).

The protein belongs to the TPP enzyme family. MenD subfamily. As to quaternary structure, homodimer. Requires Mg(2+) as cofactor. The cofactor is Mn(2+). It depends on thiamine diphosphate as a cofactor.

The catalysed reaction is isochorismate + 2-oxoglutarate + H(+) = 5-enolpyruvoyl-6-hydroxy-2-succinyl-cyclohex-3-ene-1-carboxylate + CO2. It participates in quinol/quinone metabolism; 1,4-dihydroxy-2-naphthoate biosynthesis; 1,4-dihydroxy-2-naphthoate from chorismate: step 2/7. Its pathway is quinol/quinone metabolism; menaquinone biosynthesis. Its function is as follows. Catalyzes the thiamine diphosphate-dependent decarboxylation of 2-oxoglutarate and the subsequent addition of the resulting succinic semialdehyde-thiamine pyrophosphate anion to isochorismate to yield 2-succinyl-5-enolpyruvyl-6-hydroxy-3-cyclohexene-1-carboxylate (SEPHCHC). This Haemophilus influenzae (strain ATCC 51907 / DSM 11121 / KW20 / Rd) protein is 2-succinyl-5-enolpyruvyl-6-hydroxy-3-cyclohexene-1-carboxylate synthase.